We begin with the raw amino-acid sequence, 885 residues long: GPI ethanolamine phosphate transferase 2 (885 aa).

3 N-linked (GlcNAc...) asparagine glycosylation sites follow: Asn82, Asn155, and Asn194. Residues 413 to 433 (DIYAGALILVITALAVIVVFN) traverse the membrane as a helical segment. Asn443 carries N-linked (GlcNAc...) asparagine glycosylation. Helical transmembrane passes span 447-467 (VMFY…SSLI), 473-493 (IWYF…FDTF), and 495-514 (SLQN…FMRS). Residue Asn516 is glycosylated (N-linked (GlcNAc...) asparagine). A run of 8 helical transmembrane segments spans residues 539-559 (LMWG…YIQG), 581-601 (GLIS…FKLL), 648-668 (IQLS…RVII), 697-717 (ENIP…KLIY), 726-746 (YILT…FCMG), 768-788 (VFLV…FWSL), 820-840 (ILLV…VNLV), and 865-885 (SWIL…VLLF).

The protein belongs to the PIGG/PIGN/PIGO family. PIGG subfamily.

Its subcellular location is the endoplasmic reticulum membrane. It participates in glycolipid biosynthesis; glycosylphosphatidylinositol-anchor biosynthesis. Functionally, ethanolamine phosphate transferase involved in glycosylphosphatidylinositol-anchor biosynthesis. Transfers ethanolamine phosphate to the GPI second mannose. The protein is GPI ethanolamine phosphate transferase 2 (GPI7) of Candida albicans (strain SC5314 / ATCC MYA-2876) (Yeast).